A 1172-amino-acid polypeptide reads, in one-letter code: Pesticidal crystal protein Cry1Ha (1172 aa).

This sequence belongs to the delta endotoxin family.

In terms of biological role, promotes colloidosmotic lysis by binding to the midgut epithelial cells of insects. The sequence is that of Pesticidal crystal protein Cry1Ha (cry1Ha) from Bacillus thuringiensis.